Here is a 158-residue protein sequence, read N- to C-terminus: Phosphopantetheine adenylyltransferase (158 aa).

Threonine 9 lines the substrate pocket. ATP contacts are provided by residues threonine 9–phenylalanine 10 and histidine 17. Positions 41, 73, and 87 each coordinate substrate. ATP is bound by residues glycine 88 to arginine 90, glutamate 98, and tyrosine 123 to serine 129.

This sequence belongs to the bacterial CoaD family. Homohexamer. It depends on Mg(2+) as a cofactor.

Its subcellular location is the cytoplasm. The enzyme catalyses (R)-4'-phosphopantetheine + ATP + H(+) = 3'-dephospho-CoA + diphosphate. It participates in cofactor biosynthesis; coenzyme A biosynthesis; CoA from (R)-pantothenate: step 4/5. In terms of biological role, reversibly transfers an adenylyl group from ATP to 4'-phosphopantetheine, yielding dephospho-CoA (dPCoA) and pyrophosphate. In Allochromatium vinosum (strain ATCC 17899 / DSM 180 / NBRC 103801 / NCIMB 10441 / D) (Chromatium vinosum), this protein is Phosphopantetheine adenylyltransferase.